We begin with the raw amino-acid sequence, 357 residues long: DNA replication and repair protein RecF (357 aa).

Position 30–37 (30–37) interacts with ATP; that stretch reads GANGSGKT.

Belongs to the RecF family.

It is found in the cytoplasm. The RecF protein is involved in DNA metabolism; it is required for DNA replication and normal SOS inducibility. RecF binds preferentially to single-stranded, linear DNA. It also seems to bind ATP. This is DNA replication and repair protein RecF from Salmonella heidelberg (strain SL476).